Consider the following 165-residue polypeptide: Endoribonuclease YbeY (165 aa).

Zn(2+) contacts are provided by histidine 130, histidine 134, and histidine 140.

The protein belongs to the endoribonuclease YbeY family. The cofactor is Zn(2+).

It localises to the cytoplasm. In terms of biological role, single strand-specific metallo-endoribonuclease involved in late-stage 70S ribosome quality control and in maturation of the 3' terminus of the 16S rRNA. This Streptococcus pyogenes serotype M28 (strain MGAS6180) protein is Endoribonuclease YbeY.